The primary structure comprises 146 residues: Acidic phospholipase A2 S8-51 (146 aa).

A signal peptide spans 1–19 (MYPAHLLVLLAVCVSLLGA). Residues 20–27 (ASIPPQPL) constitute a propeptide that is removed on maturation. Intrachain disulfides connect C38–C98, C54–C145, C56–C72, C71–C126, C78–C119, C87–C112, and C105–C117. Ca(2+)-binding residues include Y55, G57, and G59. H75 is an active-site residue. A Ca(2+)-binding site is contributed by D76. The active site involves D120.

It belongs to the phospholipase A2 family. Group I subfamily. D49 sub-subfamily. The cofactor is Ca(2+). In terms of tissue distribution, expressed by the venom gland.

The protein localises to the secreted. The catalysed reaction is a 1,2-diacyl-sn-glycero-3-phosphocholine + H2O = a 1-acyl-sn-glycero-3-phosphocholine + a fatty acid + H(+). Its function is as follows. Snake venom phospholipase A2 (PLA2) that inhibits collagen-induced platelet aggregation. PLA2 catalyzes the calcium-dependent hydrolysis of the 2-acyl groups in 3-sn-phosphoglycerides. The sequence is that of Acidic phospholipase A2 S8-51 from Austrelaps superbus (Lowland copperhead snake).